The sequence spans 99 residues: A-type ATP synthase subunit F (99 aa).

The protein belongs to the V-ATPase F subunit family. In terms of assembly, has multiple subunits with at least A(3), B(3), C, D, E, F, H, I and proteolipid K(x).

The protein localises to the cell membrane. Component of the A-type ATP synthase that produces ATP from ADP in the presence of a proton gradient across the membrane. The sequence is that of A-type ATP synthase subunit F from Methanocella arvoryzae (strain DSM 22066 / NBRC 105507 / MRE50).